The primary structure comprises 419 residues: Histidine--tRNA ligase (419 aa).

This sequence belongs to the class-II aminoacyl-tRNA synthetase family. Homodimer.

The protein localises to the cytoplasm. It catalyses the reaction tRNA(His) + L-histidine + ATP = L-histidyl-tRNA(His) + AMP + diphosphate + H(+). This Halothermothrix orenii (strain H 168 / OCM 544 / DSM 9562) protein is Histidine--tRNA ligase.